Reading from the N-terminus, the 399-residue chain is S-adenosylmethionine synthase (399 aa).

His-17 serves as a coordination point for ATP. Residue Asp-19 coordinates Mg(2+). Glu-45 contacts K(+). Residues Glu-58 and Gln-101 each contribute to the L-methionine site. The interval 101–111 is flexible loop; sequence QSADIAMGVDQ. Residues 177-179, 244-245, Asp-253, 259-260, Ala-276, and Lys-280 contribute to the ATP site; these read DGK, RF, and RK. Asp-253 contributes to the L-methionine binding site. Position 284 (Lys-284) interacts with L-methionine.

The protein belongs to the AdoMet synthase family. Homotetramer; dimer of dimers. It depends on Mg(2+) as a cofactor. K(+) serves as cofactor.

It localises to the cytoplasm. The enzyme catalyses L-methionine + ATP + H2O = S-adenosyl-L-methionine + phosphate + diphosphate. Its pathway is amino-acid biosynthesis; S-adenosyl-L-methionine biosynthesis; S-adenosyl-L-methionine from L-methionine: step 1/1. In terms of biological role, catalyzes the formation of S-adenosylmethionine (AdoMet) from methionine and ATP. The overall synthetic reaction is composed of two sequential steps, AdoMet formation and the subsequent tripolyphosphate hydrolysis which occurs prior to release of AdoMet from the enzyme. The polypeptide is S-adenosylmethionine synthase (Bacillus mycoides (strain KBAB4) (Bacillus weihenstephanensis)).